A 170-amino-acid chain; its full sequence is Probable deoxyuridine 5'-triphosphate nucleotidohydrolase (170 aa).

The protein belongs to the dCTP deaminase family. Archaeal dUTPase subfamily.

The enzyme catalyses dUTP + H2O = dUMP + diphosphate + H(+). It functions in the pathway pyrimidine metabolism; dUMP biosynthesis; dUMP from dCTP (dUTP route): step 2/2. In terms of biological role, this enzyme is involved in nucleotide metabolism: it produces dUMP, the immediate precursor of thymidine nucleotides and it decreases the intracellular concentration of dUTP so that uracil cannot be incorporated into DNA. This chain is Probable deoxyuridine 5'-triphosphate nucleotidohydrolase, found in Methanococcoides burtonii (strain DSM 6242 / NBRC 107633 / OCM 468 / ACE-M).